Consider the following 107-residue polypeptide: Putative double-stranded DNA mimic protein ETA_15890 (107 aa).

The protein belongs to the putative dsDNA mimic protein family.

In terms of biological role, may act as a double-stranded DNA (dsDNA) mimic. Probably regulates the activity of a dsDNA-binding protein. The sequence is that of Putative double-stranded DNA mimic protein ETA_15890 from Erwinia tasmaniensis (strain DSM 17950 / CFBP 7177 / CIP 109463 / NCPPB 4357 / Et1/99).